The following is a 935-amino-acid chain: DNA repair protein rev1 (935 aa).

The BRCT domain occupies 59–147 (SKSDLFHGLA…KILPWINYRT (89 aa)). A compositionally biased stretch (polar residues) spans 162 to 178 (SKPSQPEGNLEDIQTSS). The interval 162–193 (SKPSQPEGNLEDIQTSSQEEEHDNEKDKTKES) is disordered. Positions 184–193 (DNEKDKTKES) are enriched in basic and acidic residues. Residues 235 to 245 (FFSSSRLHHLS) form an interaction with target DNA region. DCTP is bound by residues Arg-240 and 283 to 287 (DFDCF). A UmuC domain is found at 279 to 460 (LLHVDFDCFF…LSVQDLPGVG (182 aa)). Mg(2+) is bound by residues Asp-283 and Phe-284. Residues 310–312 (IKN) form an interaction with target DNA region. Residues 317-323 (SCNYEAR), Asn-329, and Asp-378 contribute to the dCTP site. Positions 378 and 379 each coordinate Mg(2+). Interaction with target DNA regions lie at residues 460 to 463 (GSSQ) and 517 to 525 (RRSISVDVN).

It belongs to the DNA polymerase type-Y family. Mg(2+) is required as a cofactor.

It is found in the nucleus. It localises to the nucleolus. Its subcellular location is the mitochondrion. The protein resides in the cytoplasm. The protein localises to the cytoskeleton. It is found in the spindle. Deoxycytidyl transferase involved in DNA repair. Transfers a dCMP residue from dCTP to the 3'-end of a DNA primer in a template-dependent reaction. May assist in the first step in the bypass of abasic lesions by the insertion of a nucleotide opposite the lesion. Required for normal induction of mutations by physical and chemical agents. Involved in mitochondrial DNA mutagenesis. This Schizosaccharomyces pombe (strain 972 / ATCC 24843) (Fission yeast) protein is DNA repair protein rev1.